Reading from the N-terminus, the 324-residue chain is Tumor necrosis factor receptor superfamily member 6 (324 aa).

The signal sequence occupies residues 1 to 21 (MLWIMAVLPLVLAGPELNVRM). The Extracellular portion of the chain corresponds to 22-171 (QGTDSIFEGL…CKKQSSNYKL (150 aa)). An N-linked (GlcNAc...) asparagine glycan is attached at N43. 3 TNFR-Cys repeats span residues 43 to 79 (NCSE…PTCH), 80 to 123 (PCTE…NTKC), and 124 to 163 (RCKE…TKCK). 9 cysteine pairs are disulfide-bonded: C44–C55, C56–C69, C59–C78, C81–C97, C100–C115, C103–C123, C125–C139, C142–C154, and C145–C162. N-linked (GlcNAc...) asparagine glycans are attached at residues N114 and N132. The chain crosses the membrane as a helical span at residues 172–188 (LWLLILPGLAILFVFIY). Residues 189 to 324 (KRYRKRQPGD…RNENEGQSLE (136 aa)) are Cytoplasmic-facing. An interaction with HIPK3 region spans residues 201–306 (SGIPSPESVP…EEIQAMVWED (106 aa)). At S214 the chain carries Phosphoserine. The tract at residues 219–243 (NKYIWRTAEKMKICDAKKFARQHKI) is interaction with CALM. Residues 219 to 303 (NKYIWRTAEK…DIAEEIQAMV (85 aa)) enclose the Death domain.

Component of the death-induced signaling complex (DISC) composed of cell surface receptor FAS/CD95, adapter protein FADD and the CASP8 protease; recruitment of CASP8 to the complex is required for processing of CASP8 into the p18 and p10 subunits. Interacts directly (via DED domain) with NOL3 (via CARD domain); inhibits death-inducing signaling complex (DISC) assembly by inhibiting the increase in FAS-FADD binding induced by FAS activation. Binds DAXX. Interacts with HIPK3. Part of a complex containing HIPK3 and FADD. Binds RIPK1 and FAIM2. Interacts with BABAM2 and FEM1B. Interacts with CALM. In the absence of stimulation, interacts with BIRC2, DDX3X and GSK3B. The interaction with BIRC2 and DDX3X is further enhanced upon receptor stimulation and accompanied by DDX3X and BIRC2 cleavage. Post-translationally, palmitoylated. Palmitoylation by ZDHHC7 prevents the lysosomal degradation of FAS regulating its expression at the plasma membrane.

Its subcellular location is the cell membrane. It localises to the membrane raft. Receptor for TNFSF6/FASLG. The adapter molecule FADD recruits caspase CASP8 to the activated receptor. The resulting death-inducing signaling complex (DISC) performs CASP8 proteolytic activation which initiates the subsequent cascade of caspases (aspartate-specific cysteine proteases) mediating apoptosis. FAS-mediated apoptosis may have a role in the induction of peripheral tolerance, in the antigen-stimulated suicide of mature T-cells, or both. The polypeptide is Tumor necrosis factor receptor superfamily member 6 (Fas) (Rattus norvegicus (Rat)).